Here is a 521-residue protein sequence, read N- to C-terminus: 4-cresol dehydrogenase [hydroxylating] flavoprotein subunit (521 aa).

An FAD-binding PCMH-type domain is found at 54 to 268 (AAHAPSAAVT…VEIVDALRPL (215 aa)). Y384 is subject to O-8alpha-FAD tyrosine.

Tetramer of two cytochrome subunits and two flavoprotein subunits. The cofactor is FAD.

It catalyses the reaction 4-methylphenol + 4 oxidized [azurin] + H2O = 4 reduced [azurin] + 4-hydroxybenzaldehyde + 4 H(+). Its pathway is aromatic compound metabolism; p-cresol degradation. Its function is as follows. Catalyzes the azurin dependent hydroxylation of the methyl group of 4-methylphenol to form 4-hydroxybenzaldehyde. This chain is 4-cresol dehydrogenase [hydroxylating] flavoprotein subunit (pchF), found in Pseudomonas putida (Arthrobacter siderocapsulatus).